Here is a 350-residue protein sequence, read N- to C-terminus: D-alanine--D-alanine ligase (350 aa).

The ATP-grasp domain occupies 133–334 (NDIFELNKIP…VSEVFDNLIG (202 aa)). ATP is bound at residue 161–216 (FEKTSKAVYVKPCNAGSSVGVMRAETEEELEKAIQNAFQYDRRILVEEEIIGPELQ). Aspartate 288, glutamate 300, and asparagine 302 together coordinate Mg(2+).

It belongs to the D-alanine--D-alanine ligase family. It depends on Mg(2+) as a cofactor. The cofactor is Mn(2+).

The protein localises to the cytoplasm. The enzyme catalyses 2 D-alanine + ATP = D-alanyl-D-alanine + ADP + phosphate + H(+). It participates in cell wall biogenesis; peptidoglycan biosynthesis. Its function is as follows. Cell wall formation. This Finegoldia magna (strain ATCC 29328 / DSM 20472 / WAL 2508) (Peptostreptococcus magnus) protein is D-alanine--D-alanine ligase.